Consider the following 390-residue polypeptide: MSGNSIGKLFSVTSFGESHGPAIGCIVDGCPPGLTLSVEDIQQELDRRKPGTSRHVTQRREADRVEILSGVFENTTTGTPIALLIRNEDQRSKDYSKIMDVFRPGHADYTYWQKYGIRDYRGGGRSSARETAVRVAAGAIARKWLQQRYGIVIRGYMAQLGSIAIPFKSWDVVNQNPFFVADNDYVQKLETFMDSLRKSGNSAGARINVVAEGVPVGWGEPVYDRLDADIAYAMMSINAVKGVEIGAGFNSITQKGTEHSDEITPEGFLSNNAGGILGGISSGQPVVVSVAIKPTSSIRLARRSIDKAGNPVLVETHGRHDPCVGIRATPIVEAMLAIVLMDHALRHRAQNADVVCSTPRIPGSTTNQIHPVEMQASAPRAEDPEPDESS.

Positions 48 and 54 each coordinate NADP(+). FMN contacts are provided by residues 125–127 (RSS), 238–239 (NA), Gly278, 293–297 (KPTSS), and Arg319. The tract at residues 359 to 390 (PRIPGSTTNQIHPVEMQASAPRAEDPEPDESS) is disordered.

This sequence belongs to the chorismate synthase family. In terms of assembly, homotetramer. FMNH2 is required as a cofactor.

It catalyses the reaction 5-O-(1-carboxyvinyl)-3-phosphoshikimate = chorismate + phosphate. The protein operates within metabolic intermediate biosynthesis; chorismate biosynthesis; chorismate from D-erythrose 4-phosphate and phosphoenolpyruvate: step 7/7. Functionally, catalyzes the anti-1,4-elimination of the C-3 phosphate and the C-6 proR hydrogen from 5-enolpyruvylshikimate-3-phosphate (EPSP) to yield chorismate, which is the branch point compound that serves as the starting substrate for the three terminal pathways of aromatic amino acid biosynthesis. This reaction introduces a second double bond into the aromatic ring system. The chain is Chorismate synthase from Nitrosomonas europaea (strain ATCC 19718 / CIP 103999 / KCTC 2705 / NBRC 14298).